The sequence spans 103 residues: UPF0145 protein HH_1800 (103 aa).

Belongs to the UPF0145 family.

The polypeptide is UPF0145 protein HH_1800 (Helicobacter hepaticus (strain ATCC 51449 / 3B1)).